Reading from the N-terminus, the 545-residue chain is Ubiquitin carboxyl-terminal hydrolase 17-like protein D (545 aa).

Positions 51-348 (CGLQNTGNSC…NAYVLFYVQQ (298 aa)) constitute a USP domain. Cys60 functions as the Nucleophile in the catalytic mechanism. His307 (proton acceptor) is an active-site residue. Disordered stretches follow at residues 367–443 (LDPE…KLGQ) and 521–545 (RQEG…LLVR). A compositionally biased stretch (basic residues) spans 374–385 (KKSRRKKHKKKS). The span at 393 to 404 (EPSKNREKKATK) shows a compositional bias: basic and acidic residues. Residues 524-537 (GRRRSKKGKNKNKQ) show a composition bias toward basic residues.

This sequence belongs to the peptidase C19 family. USP17 subfamily. As to expression, detected in T-cell, myeloid, and embryonic stem cell lines.

Its subcellular location is the nucleus. The protein localises to the endoplasmic reticulum. The catalysed reaction is Thiol-dependent hydrolysis of ester, thioester, amide, peptide and isopeptide bonds formed by the C-terminal Gly of ubiquitin (a 76-residue protein attached to proteins as an intracellular targeting signal).. Its function is as follows. Deubiquitinating enzyme that removes conjugated ubiquitin from specific proteins to regulate different cellular processes that may include cell proliferation, progression through the cell cycle, apoptosis, cell migration, and the cellular response to viral infection. This chain is Ubiquitin carboxyl-terminal hydrolase 17-like protein D, found in Mus musculus (Mouse).